The sequence spans 356 residues: UDP-N-acetylglucosamine--N-acetylmuramyl-(pentapeptide) pyrophosphoryl-undecaprenol N-acetylglucosamine transferase (356 aa).

2 residues coordinate UDP-N-acetyl-alpha-D-glucosamine: Ser198 and Gln289.

Belongs to the glycosyltransferase 28 family. MurG subfamily.

It is found in the cell membrane. It carries out the reaction Mur2Ac(oyl-L-Ala-gamma-D-Glu-L-Lys-D-Ala-D-Ala)-di-trans,octa-cis-undecaprenyl diphosphate + UDP-N-acetyl-alpha-D-glucosamine = beta-D-GlcNAc-(1-&gt;4)-Mur2Ac(oyl-L-Ala-gamma-D-Glu-L-Lys-D-Ala-D-Ala)-di-trans,octa-cis-undecaprenyl diphosphate + UDP + H(+). It functions in the pathway cell wall biogenesis; peptidoglycan biosynthesis. Cell wall formation. Catalyzes the transfer of a GlcNAc subunit on undecaprenyl-pyrophosphoryl-MurNAc-pentapeptide (lipid intermediate I) to form undecaprenyl-pyrophosphoryl-MurNAc-(pentapeptide)GlcNAc (lipid intermediate II). The sequence is that of UDP-N-acetylglucosamine--N-acetylmuramyl-(pentapeptide) pyrophosphoryl-undecaprenol N-acetylglucosamine transferase from Streptococcus thermophilus (strain CNRZ 1066).